The following is a 101-amino-acid chain: Small ribosomal subunit protein uS14 (101 aa).

Belongs to the universal ribosomal protein uS14 family. As to quaternary structure, part of the 30S ribosomal subunit. Contacts proteins S3 and S10.

Functionally, binds 16S rRNA, required for the assembly of 30S particles and may also be responsible for determining the conformation of the 16S rRNA at the A site. This is Small ribosomal subunit protein uS14 from Aliivibrio salmonicida (strain LFI1238) (Vibrio salmonicida (strain LFI1238)).